We begin with the raw amino-acid sequence, 214 residues long: Soluble inorganic pyrophosphatase (214 aa).

The disordered stretch occupies residues 1–20; that stretch reads MSEEDKTAASAEQPKRAPKL. The substrate site is built by Lys64, Arg78, and Tyr90. Positions 100, 105, and 137 each coordinate Mg(2+). Tyr174 lines the substrate pocket.

The protein belongs to the PPase family. It depends on Mg(2+) as a cofactor.

Its subcellular location is the cytoplasm. The catalysed reaction is diphosphate + H2O = 2 phosphate + H(+). This chain is Soluble inorganic pyrophosphatase (IPP), found in Zea mays (Maize).